The following is an 846-amino-acid chain: Disks large-associated protein 5 (846 aa).

Phosphoserine; by CDK1 is present on serine 67. Positions 90–120 form a coiled coil; sequence RKQMLQKYKEEKQLQKLKEQREKAKRGIFKV. Residues 153-284 form a disordered region; that stretch reads TRSKAKDQME…TNATSGMNPD (132 aa). Basic and acidic residues-rich tracts occupy residues 156–174 and 182–194; these read KAKD…DVRA and TSEK…EKKV. Phosphoserine is present on serine 202. The span at 203–225 shows a compositional bias: polar residues; sequence LRMTRSATQAAKQVPRTVSSTTA. Residues 250-266 show a composition bias toward basic and acidic residues; sequence KNVETKPDKGISCKVDS. Polar residues predominate over residues 269–281; that stretch reads NTLNSQTNATSGM. Threonine 326 carries the post-translational modification Phosphothreonine. Residue threonine 329 is modified to Phosphothreonine; by CDK1. The residue at position 338 (threonine 338) is a Phosphothreonine. A Glycyl lysine isopeptide (Lys-Gly) (interchain with G-Cter in SUMO2) cross-link involves residue lysine 347. Phosphothreonine; by CDK1 is present on residues threonine 401 and threonine 402. Phosphoserine; by CDK1 is present on serine 618. Phosphoserine; by AURKA is present on serine 627. Polar residues predominate over residues 628 to 671; it reads VSSEGPSQRLGTPKSVNKAVSQSRNEMGIPQQTTSPENAGPQNT. Residues 628–674 form a disordered region; it reads VSSEGPSQRLGTPKSVNKAVSQSRNEMGIPQQTTSPENAGPQNTKSE. Residues serine 629 and serine 634 each carry the phosphoserine modification. Threonine 639 carries the post-translational modification Phosphothreonine; by CDK1. Residue serine 642 is modified to Phosphoserine; by CDK1. Serine 662 carries the post-translational modification Phosphoserine. Residues serine 725 and serine 757 each carry the phosphoserine; by AURKA modification. A Phosphothreonine; by CDK1 modification is found at threonine 759. 2 positions are modified to phosphoserine: serine 774 and serine 777. Threonine 784 carries the phosphothreonine modification. Residues serine 806 and serine 812 each carry the phosphoserine modification. Serine 830 is modified (phosphoserine; by AURKA). Serine 839 carries the post-translational modification Phosphoserine; by CDK1.

Belongs to the SAPAP family. Interacts with CDK1. Interacts with the C-terminal proline-rich region of FBXO7. Recruited by FBXO7 to a SCF (SKP1-CUL1-F-box) protein complex in a CDK1/Cyclin B-phosphorylation dependent manner. Interacts with CDH1. In terms of processing, ubiquitinated, leading to its degradation. Decreased phosphorylation levels are associated with the differentiation of intestinal epithelial cells. As to expression, abundantly expressed in fetal liver. Expressed at lower levels in bone marrow, testis, colon, and placenta.

It is found in the nucleus. Its subcellular location is the cytoplasm. It localises to the cytoskeleton. The protein localises to the spindle. In terms of biological role, potential cell cycle regulator that may play a role in carcinogenesis of cancer cells. Mitotic phosphoprotein regulated by the ubiquitin-proteasome pathway. Key regulator of adherens junction integrity and differentiation that may be involved in CDH1-mediated adhesion and signaling in epithelial cells. In Homo sapiens (Human), this protein is Disks large-associated protein 5 (DLGAP5).